The primary structure comprises 129 residues: Small ribosomal subunit protein uS11 (129 aa).

It belongs to the universal ribosomal protein uS11 family. In terms of assembly, part of the 30S ribosomal subunit. Interacts with proteins S7 and S18. Binds to IF-3.

Functionally, located on the platform of the 30S subunit, it bridges several disparate RNA helices of the 16S rRNA. Forms part of the Shine-Dalgarno cleft in the 70S ribosome. The polypeptide is Small ribosomal subunit protein uS11 (Staphylococcus haemolyticus (strain JCSC1435)).